A 41-amino-acid chain; its full sequence is MKVRNSLKSLRTRHRDNRLVRRKGRVYIINKTQKRYKARQG.

It belongs to the bacterial ribosomal protein bL36 family.

The sequence is that of Large ribosomal subunit protein bL36 from Beijerinckia indica subsp. indica (strain ATCC 9039 / DSM 1715 / NCIMB 8712).